The chain runs to 454 residues: Putative serine carboxypeptidase-like 23 (454 aa).

A signal peptide spans 1-22 (MARIHLIIILLVISSTSSSSSS). N-linked (GlcNAc...) asparagine glycosylation is found at N52, N102, and N136. 3 disulfides stabilise this stretch: C85/C338, C247/C258, and C282/C306. S178 is an active-site residue. N-linked (GlcNAc...) asparagine glycosylation is found at N287 and N327. Active-site residues include D375 and H427.

Belongs to the peptidase S10 family. Expression not detected.

It is found in the secreted. Its function is as follows. Probable carboxypeptidase. The chain is Putative serine carboxypeptidase-like 23 (SCPL23) from Arabidopsis thaliana (Mouse-ear cress).